Consider the following 206-residue polypeptide: Imidazoleglycerol-phosphate dehydratase (206 aa).

This sequence belongs to the imidazoleglycerol-phosphate dehydratase family.

The protein localises to the cytoplasm. The catalysed reaction is D-erythro-1-(imidazol-4-yl)glycerol 3-phosphate = 3-(imidazol-4-yl)-2-oxopropyl phosphate + H2O. It participates in amino-acid biosynthesis; L-histidine biosynthesis; L-histidine from 5-phospho-alpha-D-ribose 1-diphosphate: step 6/9. The sequence is that of Imidazoleglycerol-phosphate dehydratase from Leptospira borgpetersenii serovar Hardjo-bovis (strain JB197).